Reading from the N-terminus, the 279-residue chain is Thioredoxin-like 1-1, chloroplastic (279 aa).

Residues 56 to 202 form the Thioredoxin domain; the sequence is ALTERKARPL…FKDALAKHGP (147 aa). Catalysis depends on nucleophile residues C125 and C128. A disulfide bond links C125 and C128.

Belongs to the thioredoxin family.

Its function is as follows. Probable thiol-disulfide oxidoreductase that may participate in various redox reactions. This Oryza sativa subsp. japonica (Rice) protein is Thioredoxin-like 1-1, chloroplastic.